Reading from the N-terminus, the 518-residue chain is 12S seed storage globulin 1 (518 aa).

The signal sequence occupies residues 1–24 (MATTRFPSLLFYSCIFLLCNGSMA). Intrachain disulfides connect C45–C78 and C121–C324. In terms of domain architecture, Cupin type-1 1 spans 50–240 (LQAFEPLRQV…ALGISQQAAQ (191 aa)). Over residues 281–295 (QSQQEQSTQYQVGQS) the composition is skewed to low complexity. The segment at 281-311 (QSQQEQSTQYQVGQSPQYQEGQSTQYQSGQS) is disordered. The span at 296–311 (PQYQEGQSTQYQSGQS) shows a compositional bias: polar residues. One can recognise a Cupin type-1 2 domain in the interval 330 to 479 (QNIENPKRAD…AYRISRQESQ (150 aa)). A disordered region spans residues 496 to 518 (FAQTGSQSYQDEGESSSTEKASE).

Belongs to the 11S seed storage protein (globulins) family. Hexamer; each subunit is composed of an acidic and a basic chain derived from a single precursor and linked by a disulfide bond.

In terms of biological role, this is a seed storage protein. In Avena sativa (Oat), this protein is 12S seed storage globulin 1.